We begin with the raw amino-acid sequence, 277 residues long: SF-assemblin (277 aa).

Positions 1–20 are disordered; the sequence is MATSGMVSPTSGRPFSPMRS. A nonhelical region region spans residues 1–27; the sequence is MATSGMVSPTSGRPFSPMRSSVLTTTG. The rod stretch occupies residues 28–277; it reads SAIKLEHVSE…KMVNMQHNSA (250 aa). Positions 70–90 form a coiled coil; that stretch reads RLEKSMEAEVKRRAESDKQLQ.

The protein belongs to the SF-assemblin family. Post-translationally, the N-terminus is blocked.

The protein localises to the cytoplasm. Its subcellular location is the cytoskeleton. In terms of biological role, major component of the striated microtubule-associated fibers (SMAFs; system-I-fibers). This Dunaliella bioculata (Green alga) protein is SF-assemblin.